The primary structure comprises 701 residues: MEEDTDYRIRFSSLCFFNDHVGFHGTIKSSPSDFIVIEIDEQGQLVNKTIDEPIFKISEIQLEPNNFPKKPKLDLQNLSLEDGRNQEVHTLIKYTDGDQNHQSGSEKEDTIVDGTSKCEEKADVLSSFLDEKTHELLNNFACDVREKWLSKTELIGLPPEFSIGRILDKNQRASLHSAIRQKFPFLVTVGKNSEIVVKPNLEYKELCHLVSEEEAFDFFKYLDAKKENSKFTFKPDTNKDHRKAVHHFVNKKFGNLVETKSFSKMNCSAGNPNVVVTVRFREKAHKRGKRPLSECQEGKVIYTAFTLRKENLEMFEAIGFLAIKLGVIPSDFSYAGLKDKKAITYQAMVVRKVTPERLKNIEKEIEKKRMNVFNIRSVDDSLRLGQLKGNHFDIVIRNLKKQINDSANLRERIMEAIENVKKKGFVNYYGPQRFGKGRKVHTDQIGLALLKNEMMKAIKLFLTPEDLDDPVNRAKKYFLQTEDAKGTLSLMPEFKVRERALLEALHRFGMTEEGCIQAWFSLPHSMRIFYVHAYTSKIWNEAVSYRLETYGARVVQGDLVCLDEDIDDENFPNSKIHLVTEEEGSANMYAIHQVVLPVLGYNIQYPKNKVGQWYHDILSRDGLQTCRFKVPTLKLNIPGCYRQILKHPCNLSYQLMEDHDIDVKTKGSHIDETALSLLISFDLDASCYATVCLKEIMKHDV.

The residue at position 79 (S79) is a Phosphoserine. Catalysis depends on D339, which acts as the Nucleophile. In terms of domain architecture, TRUD spans 424–647 (GFVNYYGPQR…PGCYRQILKH (224 aa)).

The protein belongs to the pseudouridine synthase TruD family.

The catalysed reaction is a uridine in mRNA = a pseudouridine in mRNA. Functionally, pseudouridine synthase that catalyzes pseudouridylation of mRNAs. The sequence is that of Pseudouridylate synthase PUS7L from Homo sapiens (Human).